A 1126-amino-acid chain; its full sequence is MGNNQGKTLKIGSYHLNFVKQIAEGGFSYVFLVKDSNTSKHYALKRILIRDEDELKGVKHEISIMKRLTKHKNIVKILDYHKVSDKNNTEMFILMEYCSGGHLVEIMQKRLSSGSKFTDQEILKIFQDICESVAYMHSQQPLIIHRDLKVENVLLDEESGIYKLCDFGSATEEITRMKNKTEMQNAEDDISRHTTLQYRAPEIVDFYRSPVINEKIDIWALGCLLYKLLFYVTPFEDSGSLGILNSNYTIPPNHTHSNDLISLIKIMLNPDPINRPNIFEITNQLNLLRNQQPLFPSHKSNILLSYNENNNINNNNNNINNNNNNNIVNGKNIPKPLPKVVSQTTPTPTPPPPAPSQSPSPSPSPTVVNNIENNSNGLEHSNSNGNISQPSPTPPKRRATPGTTPSLQPVSFPPNNSNNSFDDPFRDSPRTNLSNNPFNVNSNDNSNSSNNNNNNNNNNNNNNNNNGNNITNEEILNIITQLTNNDQTNTFDSGLLLKLKSMKPGKGTMHIIVKRPLKEPLVCFKSLLLVHALLSEGNNIQFKSDVHDSKDLFNNLYLGWSKQKDRYLQLGELLSHYSLLLYKFILFHQKNYMIDGSFAFEEMKWGIPESLDSNNHPISINTIKALFDIMDHLFLVQNNLSDYCINNICSSNSSGSGNVPISLLQHCVNILNSSSYSIFCFISGSIDVLSKQFSDVDMKLISCVNQFQSMYTRLREQYTKLAQVPCFSDIFFPTLPNTAPTFTIVRSNSFNRLNSSLSDLNLNNNNNNNNNSNNSNNSNNSNSGNLSGNASLNSSFDNINSSNPFSTEPTFNPFSATTTNTSESGFGNFGLSEPTSNPSPRYQQSNNNNNNNNNNNGTPISLTPGSLSPVIGAKKPPLPPNIHHLQQQQHPQQQQQQQQQQQQQQQQQQQQQQQQQQQHPQQQGLRFPHSASLEDARLYTLILTPSSSPPLSPSTGPTTAAQQQQQQQQSQHTFDNFNINGHAPPVPQSTQPSFQPHVSFAPNVNINNNNNSHVSAPHSLNSSSSSISSISNPNLGGIAQKGSGNSLMPPPLYKPAARGHRRSQSSNGDEVRRRNLLQQQLEQNRDFLNHNRLLNKQSRMNNPNNLFDEGDSGFGDGEEEDEGLLN.

Residues 16 to 295 (LNFVKQIAEG…NLLRNQQPLF (280 aa)) enclose the Protein kinase domain. ATP contacts are provided by residues 22–30 (IAEGGFSYV) and lysine 45. Aspartate 147 acts as the Proton acceptor in catalysis. Low complexity predominate over residues 314–333 (NNNNNINNNNNNNIVNGKNI). 4 disordered regions span residues 314–469 (NNNN…NGNN), 760–901 (LNLN…QQQQ), 944–1072 (TPSS…DEVR), and 1095–1126 (NKQSRMNNPNNLFDEGDSGFGDGEEEDEGLLN). Residues 347–364 (TPTPPPPAPSQSPSPSPS) are compositionally biased toward pro residues. Positions 367–390 (VVNNIENNSNGLEHSNSNGNISQP) are enriched in polar residues. Low complexity-rich tracts occupy residues 413–422 (PPNNSNNSFD), 432–469 (NLSNNPFNVNSNDNSNSSNNNNNNNNNNNNNNNNNGNN), and 760–795 (LNLNNNNNNNNNSNNSNNSNNSNSGNLSGNASLNSS). 2 stretches are compositionally biased toward polar residues: residues 796 to 825 (FDNINSSNPFSTEPTFNPFSATTTNTSESG) and 833 to 845 (EPTSNPSPRYQQS). Positions 846–856 (NNNNNNNNNNN) are enriched in low complexity. The span at 857-866 (GTPISLTPGS) shows a compositional bias: polar residues. Composition is skewed to low complexity over residues 886 to 901 (QQQQHPQQQQQQQQQQ), 953 to 971 (PSTGPTTAAQQQQQQQQSQ), and 1003 to 1035 (NVNINNNNNSHVSAPHSLNSSSSSISSISNPNL). The span at 1095-1105 (NKQSRMNNPNN) shows a compositional bias: polar residues. The span at 1108 to 1126 (DEGDSGFGDGEEEDEGLLN) shows a compositional bias: acidic residues.

The protein belongs to the protein kinase superfamily. Ser/Thr protein kinase family.

The catalysed reaction is L-seryl-[protein] + ATP = O-phospho-L-seryl-[protein] + ADP + H(+). The enzyme catalyses L-threonyl-[protein] + ATP = O-phospho-L-threonyl-[protein] + ADP + H(+). The protein is Probable serine/threonine-protein kinase DDB_G0280111 of Dictyostelium discoideum (Social amoeba).